We begin with the raw amino-acid sequence, 932 residues long: Protocadherin gamma-A9 (932 aa).

An N-terminal signal peptide occupies residues 1–28; the sequence is MAAPTKCQLRGRLVLLCSLLGMLWEARA. 6 Cadherin domains span residues 29-133, 134-242, 243-347, 348-452, 453-562, and 570-683; these read SQIR…APKF, QAES…APVF, AQRI…RPEV, TITS…PPAF, SQAS…APEI, and DGST…IPAD. Topologically, residues 29 to 692 are extracellular; the sequence is SQIRYSVPEE…DLEASDLTLY (664 aa). Residues asparagine 47 and asparagine 127 are each glycosylated (N-linked (GlcNAc...) asparagine). Residues asparagine 389, asparagine 419, and asparagine 545 are each glycosylated (N-linked (GlcNAc...) asparagine). A helical transmembrane segment spans residues 693 to 713; the sequence is LVVAVAVVSCVFLTFVITLLA. The Cytoplasmic portion of the chain corresponds to 714–932; the sequence is LRLRHWHSSH…KKKSGKKEKK (219 aa). Disordered stretches follow at residues 803–841 and 902–932; these read DTPL…WPNN and ATLT…KEKK. Polar residues predominate over residues 816 to 841; the sequence is WRFSQAQRPGTSGSQNGDDTGTWPNN. Positions 922-932 are enriched in basic residues; sequence NKKKSGKKEKK.

The protein resides in the cell membrane. Potential calcium-dependent cell-adhesion protein. May be involved in the establishment and maintenance of specific neuronal connections in the brain. The protein is Protocadherin gamma-A9 (PCDHGA9) of Homo sapiens (Human).